Reading from the N-terminus, the 250-residue chain is UPF0736 protein BLi01230/BL03322 (250 aa).

It belongs to the UPF0736 family.

The protein is UPF0736 protein BLi01230/BL03322 of Bacillus licheniformis (strain ATCC 14580 / DSM 13 / JCM 2505 / CCUG 7422 / NBRC 12200 / NCIMB 9375 / NCTC 10341 / NRRL NRS-1264 / Gibson 46).